We begin with the raw amino-acid sequence, 167 residues long: Protein-export protein SecB (167 aa).

The interval 1-20 (MASNDDAPVGAANGNGNTGA) is disordered.

The protein belongs to the SecB family. As to quaternary structure, homotetramer, a dimer of dimers. One homotetramer interacts with 1 SecA dimer.

It is found in the cytoplasm. Its function is as follows. One of the proteins required for the normal export of preproteins out of the cell cytoplasm. It is a molecular chaperone that binds to a subset of precursor proteins, maintaining them in a translocation-competent state. It also specifically binds to its receptor SecA. The chain is Protein-export protein SecB from Mesorhizobium japonicum (strain LMG 29417 / CECT 9101 / MAFF 303099) (Mesorhizobium loti (strain MAFF 303099)).